Here is a 433-residue protein sequence, read N- to C-terminus: Protein disulfide-isomerase A6 homolog (433 aa).

A signal peptide spans 1–19 (MRQLASILLLAFVVGSVSA). Thioredoxin domains follow at residues 20–119 (FYSP…GQRT) and 120–267 (AKAI…KHVA). Residues Cys-55, Cys-58, Cys-186, and Cys-189 each act as nucleophile in the active site. 2 disulfides stabilise this stretch: Cys-55–Cys-58 and Cys-186–Cys-189. Asn-279 carries an N-linked (GlcNAc...) asparagine glycan. Positions 405 to 433 (VDPWDGKDGQLPTEEDIDLSDIDLDKDEL) are disordered. Positions 417–433 (TEEDIDLSDIDLDKDEL) are enriched in acidic residues. The Prevents secretion from ER signature appears at 430–433 (KDEL).

The protein belongs to the protein disulfide isomerase family. As to quaternary structure, interacts with Drpr (via extracellular region). In terms of tissue distribution, in the blastoderm embryo, expression starts at the anterior and posterior poles and later appears as broad stripes. Following gastrulation, expressed in midline precursor cells and the posterior head with low levels present throughout the embryo. During germ band extension, weak dorsoventral stripes of expression are evident. Midline expression begins and is retained throughout embryogenesis in clusters of cells in each segment in the central nervous system. At least some of the midline expression occurs in VUM neurons.

The protein localises to the endoplasmic reticulum lumen. It localises to the cell surface. It carries out the reaction Catalyzes the rearrangement of -S-S- bonds in proteins.. In terms of biological role, binds to both apoptotic cells and phagocytes and promotes Drpr-dependent phagocytosis of apoptotic cells. The protein is Protein disulfide-isomerase A6 homolog of Drosophila melanogaster (Fruit fly).